Here is an 876-residue protein sequence, read N- to C-terminus: Probable galactinol--sucrose galactosyltransferase 4 (876 aa).

Phosphoserine is present on residues S7 and S9.

It belongs to the glycosyl hydrolases 36 family.

The catalysed reaction is alpha-D-galactosyl-(1-&gt;3)-1D-myo-inositol + sucrose = raffinose + myo-inositol. Transglycosidase operating by a ping-pong reaction mechanism. Involved in the synthesis of raffinose, a major soluble carbohydrate in seeds, roots and tubers. This is Probable galactinol--sucrose galactosyltransferase 4 (RFS4) from Arabidopsis thaliana (Mouse-ear cress).